A 207-amino-acid chain; its full sequence is Chloramphenicol acetyltransferase (207 aa).

Residue H186 is the Proton acceptor of the active site.

The protein belongs to the chloramphenicol acetyltransferase family. Homotrimer.

The catalysed reaction is chloramphenicol + acetyl-CoA = chloramphenicol 3-acetate + CoA. Its function is as follows. This enzyme is an effector of chloramphenicol resistance in bacteria. This is Chloramphenicol acetyltransferase (catP) from Clostridium perfringens.